The sequence spans 287 residues: Large ribosomal subunit protein uL2 (287 aa).

Positions 221 to 287 are disordered; that stretch reads RGSVMNPCDH…SKRSRGGRDS (67 aa). Basic residues predominate over residues 258–287; it reads KTRKKNKPSNKLVVRRRRRISKRSRGGRDS.

It belongs to the universal ribosomal protein uL2 family. In terms of assembly, part of the 50S ribosomal subunit. Forms a bridge to the 30S subunit in the 70S ribosome.

In terms of biological role, one of the primary rRNA binding proteins. Required for association of the 30S and 50S subunits to form the 70S ribosome, for tRNA binding and peptide bond formation. It has been suggested to have peptidyltransferase activity; this is somewhat controversial. Makes several contacts with the 16S rRNA in the 70S ribosome. In Prochlorococcus marinus (strain MIT 9312), this protein is Large ribosomal subunit protein uL2.